The sequence spans 132 residues: Fibroblast growth factor 1 (132 aa).

Heparin contacts are provided by residues Asn-10 and 108-120 (KTKP…FGQK).

It belongs to the heparin-binding growth factors family.

Its subcellular location is the secreted. The protein resides in the cytoplasm. The protein localises to the cell cortex. It localises to the cytosol. It is found in the nucleus. In terms of biological role, plays an important role in the regulation of cell survival, cell division, angiogenesis, cell differentiation and cell migration. Functions as a potent mitogen in vitro. Acts as a ligand for FGFR1 and integrins. Binds to FGFR1 in the presence of heparin leading to FGFR1 dimerization and activation via sequential autophosphorylation on tyrosine residues which act as docking sites for interacting proteins, leading to the activation of several signaling cascades. Binds to integrins. Its binding to integrins and subsequent ternary complex formation with integrins and FGFR1 are essential for FGF1 signaling. This chain is Fibroblast growth factor 1 (fgf1), found in Notophthalmus viridescens (Eastern newt).